The sequence spans 242 residues: Endothelial protein C receptor (242 aa).

A signal peptide spans 1–17 (MLTKFLPLLLLLLPGCA). The Extracellular portion of the chain corresponds to 18 to 214 (LCNSDGSQSL…GSQTGRSYTS (197 aa)). 5 N-linked (GlcNAc...) asparagine glycosylation sites follow: asparagine 46, asparagine 63, asparagine 140, asparagine 166, and asparagine 176. 2 disulfides stabilise this stretch: cysteine 119–cysteine 190 and cysteine 223–cysteine 236. A helical membrane pass occupies residues 215–235 (LVLGILMGCFIIAGVAVGIFM). At 236-242 (CTSGRRC) the chain is on the cytoplasmic side.

Expressed in endothelial cells.

Its subcellular location is the membrane. Functionally, binds activated protein C. Enhances protein C activation by the thrombin-thrombomodulin complex; plays a role in the protein C pathway controlling blood coagulation. The chain is Endothelial protein C receptor (Procr) from Mus musculus (Mouse).